The primary structure comprises 242 residues: Probable septum site-determining protein MinC (242 aa).

The segment covering 120–135 (APKKVEEKPAEPEHKP) has biased composition (basic and acidic residues). The disordered stretch occupies residues 120–144 (APKKVEEKPAEPEHKPSRIVTSPVR).

This sequence belongs to the MinC family. As to quaternary structure, interacts with MinD and FtsZ.

Functionally, cell division inhibitor that blocks the formation of polar Z ring septums. Rapidly oscillates between the poles of the cell to destabilize FtsZ filaments that have formed before they mature into polar Z rings. Prevents FtsZ polymerization. The sequence is that of Probable septum site-determining protein MinC from Ectopseudomonas mendocina (strain ymp) (Pseudomonas mendocina).